We begin with the raw amino-acid sequence, 565 residues long: Receptor-like serine/threonine-protein kinase NCRK (565 aa).

Positions 1 to 23 (MKMRVETALAILLVLISIQQCYG) are cleaved as a signal peptide. Residues 24-103 (GVSNYTCTCF…SKKQYLSRKL (80 aa)) lie on the Extracellular side of the membrane. N-linked (GlcNAc...) asparagine glycosylation is found at Asn27, Asn37, Asn45, Asn77, and Asn85. Residues 104 to 124 (VIVILLFCGVLISLAFLASMI) traverse the membrane as a helical segment. The Cytoplasmic portion of the chain corresponds to 125–565 (CYICRKDKFS…PVLLEPSAHI (441 aa)). Positions 210–495 (FSSNSVIGHG…REVVQILSTI (286 aa)) constitute a Protein kinase domain. Residues 216–224 (IGHGGSSCV) and Lys238 each bind ATP. Asp339 (proton acceptor) is an active-site residue. Residues Thr378 and Thr383 each carry the phosphothreonine modification. Tyr391 is subject to Phosphotyrosine.

Belongs to the protein kinase superfamily. Ser/Thr protein kinase family. As to quaternary structure, interacts with ARAC5. In terms of processing, phosphorylated. As to expression, mostly expressed in leaf primordia, root and shoot apical meristems, lateral root primordia, and stele of older roots and hypocotyls. In leaves and cotyledons, highest levels observed in trichomes, vasculatures, and hydathode endothem.

The protein localises to the cell membrane. The protein resides in the prevacuolar compartment membrane. Its subcellular location is the endosome. It catalyses the reaction L-seryl-[protein] + ATP = O-phospho-L-seryl-[protein] + ADP + H(+). The enzyme catalyses L-threonyl-[protein] + ATP = O-phospho-L-threonyl-[protein] + ADP + H(+). This chain is Receptor-like serine/threonine-protein kinase NCRK (NCRK), found in Arabidopsis thaliana (Mouse-ear cress).